We begin with the raw amino-acid sequence, 398 residues long: Acetate kinase (398 aa).

N7 provides a ligand contact to Mg(2+). K14 contacts ATP. Residue R85 participates in substrate binding. D142 acts as the Proton donor/acceptor in catalysis. ATP-binding positions include 202-206, 277-279, and 325-329; these read HLGNG, DMR, and GIGEN. Residue E379 coordinates Mg(2+).

It belongs to the acetokinase family. As to quaternary structure, homodimer. Requires Mg(2+) as cofactor. The cofactor is Mn(2+).

It is found in the cytoplasm. The enzyme catalyses acetate + ATP = acetyl phosphate + ADP. The protein operates within metabolic intermediate biosynthesis; acetyl-CoA biosynthesis; acetyl-CoA from acetate: step 1/2. Functionally, catalyzes the formation of acetyl phosphate from acetate and ATP. Can also catalyze the reverse reaction. This chain is Acetate kinase, found in Deinococcus radiodurans (strain ATCC 13939 / DSM 20539 / JCM 16871 / CCUG 27074 / LMG 4051 / NBRC 15346 / NCIMB 9279 / VKM B-1422 / R1).